A 144-amino-acid chain; its full sequence is D-aminoacyl-tRNA deacylase (144 aa).

Positions 136–137 (GP) match the Gly-cisPro motif, important for rejection of L-amino acids motif.

The protein belongs to the DTD family. Homodimer.

Its subcellular location is the cytoplasm. It carries out the reaction glycyl-tRNA(Ala) + H2O = tRNA(Ala) + glycine + H(+). The enzyme catalyses a D-aminoacyl-tRNA + H2O = a tRNA + a D-alpha-amino acid + H(+). Its function is as follows. An aminoacyl-tRNA editing enzyme that deacylates mischarged D-aminoacyl-tRNAs. Also deacylates mischarged glycyl-tRNA(Ala), protecting cells against glycine mischarging by AlaRS. Acts via tRNA-based rather than protein-based catalysis; rejects L-amino acids rather than detecting D-amino acids in the active site. By recycling D-aminoacyl-tRNA to D-amino acids and free tRNA molecules, this enzyme counteracts the toxicity associated with the formation of D-aminoacyl-tRNA entities in vivo and helps enforce protein L-homochirality. The polypeptide is D-aminoacyl-tRNA deacylase (Haemophilus influenzae (strain 86-028NP)).